A 109-amino-acid polypeptide reads, in one-letter code: Sulredoxin (109 aa).

One can recognise a Rieske domain in the interval 3-107 (WKRTISAKAL…IRDNNGWIEV (105 aa)). C43, H45, C62, and H65 together coordinate [2Fe-2S] cluster.

In terms of assembly, homooligomeric. The cofactor is [2Fe-2S] cluster.

The protein localises to the cytoplasm. In terms of biological role, not yet known. This chain is Sulredoxin (sdx), found in Sulfurisphaera tokodaii (strain DSM 16993 / JCM 10545 / NBRC 100140 / 7) (Sulfolobus tokodaii).